The following is a 167-amino-acid chain: MITAVYPGTFDPLTRGHEDLVRRAAALFDKVVVAVAYSRNKKPFFNIDERVEIAREVLGHYPNVEVRSFGGLLRDFVREQNGRVIVRGLRAMSDFEYEFQMAGMNRHLLPDVETLFMTPSDQYQFISGTIVREIAQLGGDVSKFVFPSVERWLQAKAKARREQAETE.

T9 lines the substrate pocket. ATP-binding positions include 9 to 10 and H17; that span reads TF. Positions 41, 73, and 87 each coordinate substrate. Residues 88 to 90, E98, and 123 to 129 contribute to the ATP site; these read GLR and YQFISGT.

Belongs to the bacterial CoaD family. Homohexamer. Requires Mg(2+) as cofactor.

The protein resides in the cytoplasm. It carries out the reaction (R)-4'-phosphopantetheine + ATP + H(+) = 3'-dephospho-CoA + diphosphate. It participates in cofactor biosynthesis; coenzyme A biosynthesis; CoA from (R)-pantothenate: step 4/5. Functionally, reversibly transfers an adenylyl group from ATP to 4'-phosphopantetheine, yielding dephospho-CoA (dPCoA) and pyrophosphate. The sequence is that of Phosphopantetheine adenylyltransferase from Bordetella avium (strain 197N).